A 674-amino-acid chain; its full sequence is MLAKPAAQFTLEEAQAEVEKLRKQLNQWRLEYYTKDAPTVTDNVYDDHYRDLQALEEAYPKLVTPDSPTQEVGDVINSDFAKVQHPIPMLSMGDVFSFEELSEWDARMQSNVGHPVDYNVELKIDGLALSLIYENGKLVQGSTRGDGNVGEDVTRNVLTIASVPKQLKQPLSLEVRGECYMPKAAFAKLNARQETEGGTPFANPRNAAAGSLRQLDAKVTAARELDTFIYTLIEPEQFNVTTQHEAIAFMQALGFTTNPSSEVAGDMQAIDTYIKKYTTDRDALPYGIDGIVLKVNDLALQAQLGNTVKVPRWEIAYKFPPEEAETVIHDIVWTVGRTGVVTPTAVMDPVQLAGTTVARATLHNADMIRDKDIRIGDTVMLHKAGDIIPEVSRVLVAKRPVDTPPAPIPEACPSCGQKLVHLDDEVALRCINPMCPAQVQEQLTHFASRNAMNIDGLGPKIVAQLQAKHLVKDVADLYHLTAADLAKLDKFKEKSINNLLSAINNSRQNSVERLIFGLGIRHVGGKAARILAEHFGDLDHLMTASQEAIADVPNIGPTIAEAIVTYFKAATVQKLITQLREADVNLRYTGPTKPVVKDSFVAGKTVVITGKFAEFSRPALTKQLEGLGAKVTGSVSKKTDLLIAGDAAGSKLAKAQSLNVPIMNETELLANLKD.

NAD(+) contacts are provided by residues 42–46, 91–92, and Glu-121; these read DNVYD and SM. Lys-123 serves as the catalytic N6-AMP-lysine intermediate. Residues Arg-144, Glu-178, Lys-294, and Lys-318 each coordinate NAD(+). Zn(2+) contacts are provided by Cys-412, Cys-415, Cys-430, and Cys-435. One can recognise a BRCT domain in the interval 596–674; that stretch reads VKDSFVAGKT…ETELLANLKD (79 aa).

The protein belongs to the NAD-dependent DNA ligase family. LigA subfamily. Mg(2+) is required as a cofactor. It depends on Mn(2+) as a cofactor.

The catalysed reaction is NAD(+) + (deoxyribonucleotide)n-3'-hydroxyl + 5'-phospho-(deoxyribonucleotide)m = (deoxyribonucleotide)n+m + AMP + beta-nicotinamide D-nucleotide.. Functionally, DNA ligase that catalyzes the formation of phosphodiester linkages between 5'-phosphoryl and 3'-hydroxyl groups in double-stranded DNA using NAD as a coenzyme and as the energy source for the reaction. It is essential for DNA replication and repair of damaged DNA. The sequence is that of DNA ligase from Lacticaseibacillus casei (strain BL23) (Lactobacillus casei).